Here is a 353-residue protein sequence, read N- to C-terminus: Phospho-N-acetylmuramoyl-pentapeptide-transferase (353 aa).

A run of 10 helical transmembrane segments spans residues 16–36 (YISV…MYLM), 64–84 (AGTP…ATVL), 88–108 (LNNF…LIGI), 130–150 (LIFQ…YGHS), 160–180 (FPLF…IVGS), 198–218 (SILA…AVFA), 228–248 (IAGE…AFLW), 256–276 (VFMG…LAIV), 281–301 (ILLL…ILQV), and 330–350 (KIIV…LLSL).

The protein belongs to the glycosyltransferase 4 family. MraY subfamily. It depends on Mg(2+) as a cofactor.

Its subcellular location is the cell inner membrane. The enzyme catalyses UDP-N-acetyl-alpha-D-muramoyl-L-alanyl-gamma-D-glutamyl-meso-2,6-diaminopimeloyl-D-alanyl-D-alanine + di-trans,octa-cis-undecaprenyl phosphate = di-trans,octa-cis-undecaprenyl diphospho-N-acetyl-alpha-D-muramoyl-L-alanyl-D-glutamyl-meso-2,6-diaminopimeloyl-D-alanyl-D-alanine + UMP. It participates in cell wall biogenesis; peptidoglycan biosynthesis. Catalyzes the initial step of the lipid cycle reactions in the biosynthesis of the cell wall peptidoglycan: transfers peptidoglycan precursor phospho-MurNAc-pentapeptide from UDP-MurNAc-pentapeptide onto the lipid carrier undecaprenyl phosphate, yielding undecaprenyl-pyrophosphoryl-MurNAc-pentapeptide, known as lipid I. This chain is Phospho-N-acetylmuramoyl-pentapeptide-transferase, found in Aliarcobacter butzleri (strain RM4018) (Arcobacter butzleri).